Reading from the N-terminus, the 458-residue chain is Bifunctional protein GlmU (458 aa).

The pyrophosphorylase stretch occupies residues 1–230; it reads MSLPTYSKLN…EWQVAGINSK (230 aa). Residues 14–17, K28, Q79, and 84–85 each bind UDP-N-acetyl-alpha-D-glucosamine; these read LAAG and GT. D108 is a binding site for Mg(2+). UDP-N-acetyl-alpha-D-glucosamine-binding residues include G141, E155, N170, and N228. Residue N228 participates in Mg(2+) binding. Residues 231–251 are linker; sequence QDLAALERVYQGRYAARLLAK. The interval 252 to 458 is N-acetyltransferase; the sequence is GVTLADPSRI…NWKRPEKVKK (207 aa). 2 residues coordinate UDP-N-acetyl-alpha-D-glucosamine: R334 and K352. The active-site Proton acceptor is the H364. Y367 and N378 together coordinate UDP-N-acetyl-alpha-D-glucosamine. Residues A381, 387-388, S406, A424, and R441 contribute to the acetyl-CoA site; that span reads NY.

In the N-terminal section; belongs to the N-acetylglucosamine-1-phosphate uridyltransferase family. It in the C-terminal section; belongs to the transferase hexapeptide repeat family. As to quaternary structure, homotrimer. Requires Mg(2+) as cofactor.

It is found in the cytoplasm. It carries out the reaction alpha-D-glucosamine 1-phosphate + acetyl-CoA = N-acetyl-alpha-D-glucosamine 1-phosphate + CoA + H(+). The enzyme catalyses N-acetyl-alpha-D-glucosamine 1-phosphate + UTP + H(+) = UDP-N-acetyl-alpha-D-glucosamine + diphosphate. The protein operates within nucleotide-sugar biosynthesis; UDP-N-acetyl-alpha-D-glucosamine biosynthesis; N-acetyl-alpha-D-glucosamine 1-phosphate from alpha-D-glucosamine 6-phosphate (route II): step 2/2. Its pathway is nucleotide-sugar biosynthesis; UDP-N-acetyl-alpha-D-glucosamine biosynthesis; UDP-N-acetyl-alpha-D-glucosamine from N-acetyl-alpha-D-glucosamine 1-phosphate: step 1/1. It participates in bacterial outer membrane biogenesis; LPS lipid A biosynthesis. In terms of biological role, catalyzes the last two sequential reactions in the de novo biosynthetic pathway for UDP-N-acetylglucosamine (UDP-GlcNAc). The C-terminal domain catalyzes the transfer of acetyl group from acetyl coenzyme A to glucosamine-1-phosphate (GlcN-1-P) to produce N-acetylglucosamine-1-phosphate (GlcNAc-1-P), which is converted into UDP-GlcNAc by the transfer of uridine 5-monophosphate (from uridine 5-triphosphate), a reaction catalyzed by the N-terminal domain. This chain is Bifunctional protein GlmU, found in Methylobacillus flagellatus (strain ATCC 51484 / DSM 6875 / VKM B-1610 / KT).